The sequence spans 434 residues: Methylenetetrahydrofolate--tRNA-(uracil-5-)-methyltransferase TrmFO (434 aa).

Residue 8–13 (GAGLAG) participates in FAD binding.

Belongs to the MnmG family. TrmFO subfamily. FAD serves as cofactor.

The protein localises to the cytoplasm. It catalyses the reaction uridine(54) in tRNA + (6R)-5,10-methylene-5,6,7,8-tetrahydrofolate + NADH + H(+) = 5-methyluridine(54) in tRNA + (6S)-5,6,7,8-tetrahydrofolate + NAD(+). It carries out the reaction uridine(54) in tRNA + (6R)-5,10-methylene-5,6,7,8-tetrahydrofolate + NADPH + H(+) = 5-methyluridine(54) in tRNA + (6S)-5,6,7,8-tetrahydrofolate + NADP(+). Its function is as follows. Catalyzes the folate-dependent formation of 5-methyl-uridine at position 54 (M-5-U54) in all tRNAs. The polypeptide is Methylenetetrahydrofolate--tRNA-(uracil-5-)-methyltransferase TrmFO (Exiguobacterium sibiricum (strain DSM 17290 / CCUG 55495 / CIP 109462 / JCM 13490 / 255-15)).